Reading from the N-terminus, the 179-residue chain is Hypoxanthine phosphoribosyltransferase (179 aa).

Residues Arg-45 and Gly-46 each contribute to the diphosphate site. Residue Glu-101 coordinates GMP. Position 101 (Glu-101) interacts with IMP. Mg(2+) is bound by residues Glu-101 and Asp-102. The active-site Proton acceptor is Asp-105. GMP-binding positions include 105 to 110, Lys-133, and Asp-161; that span reads DTGYTL. IMP-binding positions include 105–110 and Lys-133; that span reads DTGYTL. Arg-167 contributes to the diphosphate binding site.

The protein belongs to the purine/pyrimidine phosphoribosyltransferase family. As to quaternary structure, homotetramer. The cofactor is Mg(2+).

Its subcellular location is the cytoplasm. It carries out the reaction IMP + diphosphate = hypoxanthine + 5-phospho-alpha-D-ribose 1-diphosphate. The enzyme catalyses GMP + diphosphate = guanine + 5-phospho-alpha-D-ribose 1-diphosphate. It participates in purine metabolism; IMP biosynthesis via salvage pathway; IMP from hypoxanthine: step 1/1. Its function is as follows. Purine salvage pathway enzyme which catalyzes the transfer of the ribosyl-5-phosphate group from 5-phospho-alpha-D-ribose 1-diphosphate (PRPP) to the N9 position of hypoxanthine to yield IMP (inosine 5'-monophosphate). To a lesser extent, can also act on guanine leading to GMP, but shows a highly less efficient activity with xanthine. The chain is Hypoxanthine phosphoribosyltransferase (hpt) from Haemophilus influenzae (strain ATCC 51907 / DSM 11121 / KW20 / Rd).